The sequence spans 258 residues: Regulatory protein RecX (258 aa).

The protein belongs to the RecX family.

The protein localises to the cytoplasm. Its function is as follows. Modulates RecA activity. The polypeptide is Regulatory protein RecX (Streptococcus pyogenes serotype M2 (strain MGAS10270)).